The following is a 65-amino-acid chain: MKAKDIRALTTDQMLEKEKQYKEELFNLRFQQATGQLENTARLSKVRKNIARIKTILSEKALENN.

This sequence belongs to the universal ribosomal protein uL29 family.

In Lactobacillus helveticus (strain DPC 4571), this protein is Large ribosomal subunit protein uL29.